The chain runs to 417 residues: MLKREMNIADYDAELWRAMEQEVVRQEEHIELIASENYTSPRVMQAQGSQLTNKYAEGYPGKRYYGGCEYVDIVEQLAIDRAKELFGADYANVQPHSGSQANFAVYTALLQPGDTILGMNLAHGGHLTHGSPVNLSGKLYNVVPYGIDEKGQIDYEDLAKQAQTHKPKMIIGGFSAFSGIVDWAKMREIADSIGAYLFVDMAHVAGLIAAGVYPNPVPHAHIVTTTTHKTLAGPRGGLILAKGGDEDLYKKLNSAVFPGGQGGPLMHVIAGKAVALKEAMEPEFKIYQQQVAKNAKAMVEVVLERGYKVVSGGTHNHLFLLDLVDKNLTGKEADAALGRANITVNKNSVPNDPKSPFVTSGVRIGTPAVTRRGFKEADVRELAGWICDVLDNINDEATIERTKKKVLDICARLPVYA.

Residues Leu-121 and 125–127 contribute to the (6S)-5,6,7,8-tetrahydrofolate site; that span reads GHL. Lys-229 bears the N6-(pyridoxal phosphate)lysine mark. Position 355-357 (355-357) interacts with (6S)-5,6,7,8-tetrahydrofolate; sequence SPF.

The protein belongs to the SHMT family. Homodimer. Pyridoxal 5'-phosphate is required as a cofactor.

Its subcellular location is the cytoplasm. It catalyses the reaction (6R)-5,10-methylene-5,6,7,8-tetrahydrofolate + glycine + H2O = (6S)-5,6,7,8-tetrahydrofolate + L-serine. It functions in the pathway one-carbon metabolism; tetrahydrofolate interconversion. It participates in amino-acid biosynthesis; glycine biosynthesis; glycine from L-serine: step 1/1. In terms of biological role, catalyzes the reversible interconversion of serine and glycine with tetrahydrofolate (THF) serving as the one-carbon carrier. This reaction serves as the major source of one-carbon groups required for the biosynthesis of purines, thymidylate, methionine, and other important biomolecules. Also exhibits THF-independent aldolase activity toward beta-hydroxyamino acids, producing glycine and aldehydes, via a retro-aldol mechanism. In Serratia proteamaculans (strain 568), this protein is Serine hydroxymethyltransferase.